The sequence spans 228 residues: MSGIWGWFGGGSAAQKRKDSPKNAILGLRTQLDMLQKRERHLQNQIDEQDAIARKNVSTNKTAAKQALRRKKVAESTLETTLGQITTLEQQINAIESANINRETLAAMQAAREAMGKIHGKLTPEKVDEEMAKLQEANDLSNEIATAITSANIGQPIDEGELEDELEKLQQEEVDSKLHETGGSIPVHDKISLPAAGTGALKGKEKAKAVVEDDEEEELRKLQAEMAM.

Coiled coils occupy residues 25–94 (ILGL…QINA) and 125–226 (EKVD…QAEM).

This sequence belongs to the SNF7 family. As to quaternary structure, a component of the endosomal sorting required for transport complex III (ESCRT-III).

It is found in the cytoplasm. It localises to the endosome membrane. In terms of biological role, required for the sorting and concentration of proteins resulting in the entry of these proteins into the invaginating vesicles of the multivesicular body (MVB). Also required for the proteolytic cleavage of the transcription factor pacc-1 in response to alkaline ambient pH. In Neurospora crassa (strain ATCC 24698 / 74-OR23-1A / CBS 708.71 / DSM 1257 / FGSC 987), this protein is Vacuolar-sorting protein snf7 (vsp-3).